The chain runs to 180 residues: Ribosome maturation factor RimM (180 aa).

In terms of domain architecture, PRC barrel spans proline 97–leucine 169.

This sequence belongs to the RimM family. Binds ribosomal protein uS19.

The protein localises to the cytoplasm. In terms of biological role, an accessory protein needed during the final step in the assembly of 30S ribosomal subunit, possibly for assembly of the head region. Essential for efficient processing of 16S rRNA. May be needed both before and after RbfA during the maturation of 16S rRNA. It has affinity for free ribosomal 30S subunits but not for 70S ribosomes. The protein is Ribosome maturation factor RimM of Bacteroides fragilis (strain YCH46).